The primary structure comprises 606 residues: ATP-dependent rRNA helicase spb4 (606 aa).

The short motif at 1–29 (MSFQSINIDKWLKNAVAAQGFKKMTPVQA) is the Q motif element. The 182-residue stretch at 32–213 (IPLFLKNKDL…KIAGLRNSVR (182 aa)) folds into the Helicase ATP-binding domain. Residue 45 to 52 (AVTGSGKT) participates in ATP binding. The short motif at 161 to 164 (DEAD) is the DEAD box element. The Helicase C-terminal domain maps to 246 to 400 (CMIHLLCTIE…ALDLSRLKVL (155 aa)). Positions 521-574 (KQKEVKEKRNTRREKRKSKKEFLKAQKNEASNNLKQEIVSKAGAQETENDDLID) are disordered. A coiled-coil region spans residues 521–601 (KQKEVKEKRN…KSKKRKNQAS (81 aa)). Basic residues predominate over residues 529–539 (RNTRREKRKSK).

The protein belongs to the DEAD box helicase family. DDX55/SPB4 subfamily. In terms of assembly, component of pre-60S ribosomal complexes.

It is found in the nucleus. The protein resides in the nucleolus. It catalyses the reaction ATP + H2O = ADP + phosphate + H(+). In terms of biological role, ATP-binding RNA helicase involved in the biogenesis of 60S ribosomal subunits. Binds 90S pre-ribosomal particles and dissociates from pre-60S ribosomal particles after processing of 27SB pre-rRNA. Required for the normal formation of 18S rRNA through the processing of pre-rRNAs at sites A0, A1 and A2, and the normal formation of 25S and 5.8S rRNAs through the processing of pre-rRNAs at sites C1 and C2. This chain is ATP-dependent rRNA helicase spb4, found in Schizosaccharomyces pombe (strain 972 / ATCC 24843) (Fission yeast).